Here is a 570-residue protein sequence, read N- to C-terminus: Dihydroxy-acid dehydratase (570 aa).

The tract at residues methionine 1–glycine 25 is disordered. Cysteine 60 is a binding site for [2Fe-2S] cluster. Aspartate 92 serves as a coordination point for Mg(2+). [2Fe-2S] cluster is bound at residue cysteine 133. Residues aspartate 134 and lysine 135 each contribute to the Mg(2+) site. An N6-carboxylysine modification is found at lysine 135. Cysteine 202 is a binding site for [2Fe-2S] cluster. Glutamate 453 lines the Mg(2+) pocket. Residue serine 479 is the Proton acceptor of the active site.

This sequence belongs to the IlvD/Edd family. Homodimer. Requires [2Fe-2S] cluster as cofactor. Mg(2+) is required as a cofactor.

It carries out the reaction (2R)-2,3-dihydroxy-3-methylbutanoate = 3-methyl-2-oxobutanoate + H2O. It catalyses the reaction (2R,3R)-2,3-dihydroxy-3-methylpentanoate = (S)-3-methyl-2-oxopentanoate + H2O. It functions in the pathway amino-acid biosynthesis; L-isoleucine biosynthesis; L-isoleucine from 2-oxobutanoate: step 3/4. It participates in amino-acid biosynthesis; L-valine biosynthesis; L-valine from pyruvate: step 3/4. Functions in the biosynthesis of branched-chain amino acids. Catalyzes the dehydration of (2R,3R)-2,3-dihydroxy-3-methylpentanoate (2,3-dihydroxy-3-methylvalerate) into 2-oxo-3-methylpentanoate (2-oxo-3-methylvalerate) and of (2R)-2,3-dihydroxy-3-methylbutanoate (2,3-dihydroxyisovalerate) into 2-oxo-3-methylbutanoate (2-oxoisovalerate), the penultimate precursor to L-isoleucine and L-valine, respectively. This is Dihydroxy-acid dehydratase from Chromohalobacter salexigens (strain ATCC BAA-138 / DSM 3043 / CIP 106854 / NCIMB 13768 / 1H11).